The chain runs to 335 residues: Glucose-dependent insulinotropic receptor (335 aa).

Topologically, residues 1-12 (MESSFSFGVILA) are extracellular. The helical transmembrane segment at 13 to 33 (VLASLIIATNTLVAVAVLLLI) threads the bilayer. Over 34–37 (HKND) the chain is Cytoplasmic. Residues 38-58 (GVSLCFTLNLAVADTLIGVAI) traverse the membrane as a helical segment. The Extracellular segment spans residues 59 to 81 (SGLLTDQLSSPSRPTQKTLCSLR). A helical membrane pass occupies residues 82–102 (MAFVTSSAAASVLTVMLITFD). Residues 103-125 (RYLAIKQPFRYLKIMSGFVAGAC) are Cytoplasmic-facing. Residues 126 to 146 (IAGLWLVSYLIGFLPLGIPMF) form a helical membrane-spanning segment. At 147-164 (QQTAYKGQCSFFAVFHPH) the chain is on the extracellular side. Residues 165–185 (FVLTLSCVGFFPAMLLFVFFY) form a helical membrane-spanning segment. Residues 186-226 (CDMLKIASMHSQQIRKMEHAGAMAGGYRSPRTPSDFKALRT) are Cytoplasmic-facing. Residues 227 to 247 (VSVLIGSFALSWTPFLITGIV) form a helical membrane-spanning segment. The Extracellular portion of the chain corresponds to 248–262 (QVACQECHLYLVLER). A helical transmembrane segment spans residues 263–283 (YLWLLGVGNSLLNPLIYAYWQ). Residues 284–335 (KEVRLQLYHMALGVKKVLTSFLLFLSARNCGPERPRESSCHIVTISSSEFDG) are Cytoplasmic-facing.

The protein belongs to the G-protein coupled receptor 1 family. In terms of tissue distribution, predominantly expressed in the pancreas, especially in the islets.

It localises to the cell membrane. In terms of biological role, receptor for the endogenous fatty-acid ethanolamide oleoylethanolamide (OEA) and lysophosphatidylcholine (LPC). Functions as a glucose-dependent insulinotropic receptor. The activity of this receptor is mediated by G proteins which activate adenylate cyclase. Seems to act through a G(s) mediated pathway. In Homo sapiens (Human), this protein is Glucose-dependent insulinotropic receptor (GPR119).